We begin with the raw amino-acid sequence, 198 residues long: Probable nicotinate-nucleotide adenylyltransferase (198 aa).

Belongs to the NadD family.

The catalysed reaction is nicotinate beta-D-ribonucleotide + ATP + H(+) = deamido-NAD(+) + diphosphate. Its pathway is cofactor biosynthesis; NAD(+) biosynthesis; deamido-NAD(+) from nicotinate D-ribonucleotide: step 1/1. Functionally, catalyzes the reversible adenylation of nicotinate mononucleotide (NaMN) to nicotinic acid adenine dinucleotide (NaAD). This Chlorobium phaeobacteroides (strain BS1) protein is Probable nicotinate-nucleotide adenylyltransferase.